Consider the following 436-residue polypeptide: DEAD-box ATP-dependent RNA helicase CshB (436 aa).

The Q motif motif lies at 4 to 32 (QTFTQYDFKPFLIDAVRELRFTEPTGIQQ). Residues 35 to 209 (FPVVKKGVSV…KKYMENPEHI (175 aa)) enclose the Helicase ATP-binding domain. 48–55 (SQTGSGKT) provides a ligand contact to ATP. A DEAD box motif is present at residues 157–160 (DEAD). Positions 240 to 388 (MLLQFKPYLA…WADLGERRRR (149 aa)) constitute a Helicase C-terminal domain. The segment at 385-436 (RRRRKSRKKPNDELDVMATKVIKKPKKVKPNYKRKLATERDKVKRKYSNKKR) is disordered. Composition is skewed to basic residues over residues 405 to 419 (VIKK…YKRK) and 427 to 436 (VKRKYSNKKR).

Belongs to the DEAD box helicase family. CshB subfamily.

It is found in the cytoplasm. It carries out the reaction ATP + H2O = ADP + phosphate + H(+). In terms of biological role, probable DEAD-box RNA helicase. May work in conjunction with the cold shock proteins to ensure proper initiation of transcription at low and optimal temperatures. Unwinds dsRNA in both 5'- and 3'-directions and shows RNA-dependent ATPase activity. Probably has a somewhat redundant function with CshA, as cshA can partially complement the growth effects of a cshB deletion. In Bacillus cereus (strain ATCC 14579 / DSM 31 / CCUG 7414 / JCM 2152 / NBRC 15305 / NCIMB 9373 / NCTC 2599 / NRRL B-3711), this protein is DEAD-box ATP-dependent RNA helicase CshB.